The following is a 239-amino-acid chain: Pyridoxine 5'-phosphate synthase (239 aa).

Asn-7 serves as a coordination point for 3-amino-2-oxopropyl phosphate. Residue 9 to 10 (DH) coordinates 1-deoxy-D-xylulose 5-phosphate. A 3-amino-2-oxopropyl phosphate-binding site is contributed by Arg-18. Catalysis depends on His-43, which acts as the Proton acceptor. 2 residues coordinate 1-deoxy-D-xylulose 5-phosphate: Arg-45 and His-50. The Proton acceptor role is filled by Glu-70. Thr-100 is a 1-deoxy-D-xylulose 5-phosphate binding site. The Proton donor role is filled by His-191. Residues Gly-192 and 213–214 (GH) each bind 3-amino-2-oxopropyl phosphate.

Belongs to the PNP synthase family. As to quaternary structure, homooctamer; tetramer of dimers.

The protein resides in the cytoplasm. It catalyses the reaction 3-amino-2-oxopropyl phosphate + 1-deoxy-D-xylulose 5-phosphate = pyridoxine 5'-phosphate + phosphate + 2 H2O + H(+). The protein operates within cofactor biosynthesis; pyridoxine 5'-phosphate biosynthesis; pyridoxine 5'-phosphate from D-erythrose 4-phosphate: step 5/5. Its function is as follows. Catalyzes the complicated ring closure reaction between the two acyclic compounds 1-deoxy-D-xylulose-5-phosphate (DXP) and 3-amino-2-oxopropyl phosphate (1-amino-acetone-3-phosphate or AAP) to form pyridoxine 5'-phosphate (PNP) and inorganic phosphate. The chain is Pyridoxine 5'-phosphate synthase from Syntrophotalea carbinolica (strain DSM 2380 / NBRC 103641 / GraBd1) (Pelobacter carbinolicus).